We begin with the raw amino-acid sequence, 401 residues long: Riboflavin biosynthesis protein RibBA (401 aa).

Residues 1-203 form a DHBP synthase region; sequence MTDFQFSKVE…IQQLQEYRRK (203 aa). Residues 30–31, Asp35, 142–146, and Glu166 each bind D-ribulose 5-phosphate; these read RE and RNGHT. Position 31 (Glu31) interacts with Mg(2+). His145 serves as a coordination point for Mg(2+). Residues 204–401 form a GTP cyclohydrolase II region; it reads HDSLVKQISV…QIKMGHMFNF (198 aa). 254–258 is a GTP binding site; the sequence is RIHSE. Residues Cys259, Cys270, and Cys272 each coordinate Zn(2+). Residues Gln275, 297–299, and Thr319 each bind GTP; that span reads EGR. Catalysis depends on Asp331, which acts as the Proton acceptor; for GTP cyclohydrolase activity. The active-site Nucleophile; for GTP cyclohydrolase activity is Arg333. Residues Thr354 and Lys359 each contribute to the GTP site.

The protein in the N-terminal section; belongs to the DHBP synthase family. It in the C-terminal section; belongs to the GTP cyclohydrolase II family. Mg(2+) is required as a cofactor. It depends on Mn(2+) as a cofactor. Zn(2+) serves as cofactor.

It catalyses the reaction D-ribulose 5-phosphate = (2S)-2-hydroxy-3-oxobutyl phosphate + formate + H(+). It carries out the reaction GTP + 4 H2O = 2,5-diamino-6-hydroxy-4-(5-phosphoribosylamino)-pyrimidine + formate + 2 phosphate + 3 H(+). The protein operates within cofactor biosynthesis; riboflavin biosynthesis; 2-hydroxy-3-oxobutyl phosphate from D-ribulose 5-phosphate: step 1/1. Its pathway is cofactor biosynthesis; riboflavin biosynthesis; 5-amino-6-(D-ribitylamino)uracil from GTP: step 1/4. In terms of biological role, catalyzes the conversion of D-ribulose 5-phosphate to formate and 3,4-dihydroxy-2-butanone 4-phosphate. Its function is as follows. Catalyzes the conversion of GTP to 2,5-diamino-6-ribosylamino-4(3H)-pyrimidinone 5'-phosphate (DARP), formate and pyrophosphate. This chain is Riboflavin biosynthesis protein RibBA, found in Actinobacillus pleuropneumoniae serotype 3 (strain JL03).